The following is a 598-amino-acid chain: Elongation factor 4 (598 aa).

The tr-type G domain occupies 2–184 (KQIRNFSIIA…RLVKEIPAPE (183 aa)). GTP is bound by residues 14–19 (DHGKST) and 131–134 (NKID).

It belongs to the TRAFAC class translation factor GTPase superfamily. Classic translation factor GTPase family. LepA subfamily.

It is found in the cell inner membrane. The enzyme catalyses GTP + H2O = GDP + phosphate + H(+). Required for accurate and efficient protein synthesis under certain stress conditions. May act as a fidelity factor of the translation reaction, by catalyzing a one-codon backward translocation of tRNAs on improperly translocated ribosomes. Back-translocation proceeds from a post-translocation (POST) complex to a pre-translocation (PRE) complex, thus giving elongation factor G a second chance to translocate the tRNAs correctly. Binds to ribosomes in a GTP-dependent manner. In Photorhabdus laumondii subsp. laumondii (strain DSM 15139 / CIP 105565 / TT01) (Photorhabdus luminescens subsp. laumondii), this protein is Elongation factor 4.